We begin with the raw amino-acid sequence, 624 residues long: DNA mismatch repair protein MutL (624 aa).

It belongs to the DNA mismatch repair MutL/HexB family.

Functionally, this protein is involved in the repair of mismatches in DNA. It is required for dam-dependent methyl-directed DNA mismatch repair. May act as a 'molecular matchmaker', a protein that promotes the formation of a stable complex between two or more DNA-binding proteins in an ATP-dependent manner without itself being part of a final effector complex. This chain is DNA mismatch repair protein MutL, found in Xanthomonas campestris pv. campestris (strain B100).